The sequence spans 376 residues: 1-acyl-sn-glycerol-3-phosphate acyltransferase gamma (376 aa).

Residues 1–124 (MGLLAFLKTQ…LGSSKVLAKK (124 aa)) lie on the Cytoplasmic side of the membrane. An HXXXXD motif motif is present at residues 96-101 (HNFEID). Residues 125–145 (ELLYVPLIGWTWYFLEIVFCK) form a helical membrane-spanning segment. The Lumenal segment spans residues 146 to 316 (RKWEEDRDTV…TLLNFLSWAT (171 aa)). The chain crosses the membrane as a helical span at residues 317-339 (ILLSPLFSFVLGVFASGSPLLIL). The Cytoplasmic portion of the chain corresponds to 340–376 (TFLGFVGAASFGVRRLIGVTEIEKGSSYGNQEFKKKE).

This sequence belongs to the 1-acyl-sn-glycerol-3-phosphate acyltransferase family.

The protein localises to the endoplasmic reticulum membrane. It localises to the nucleus envelope. It carries out the reaction a 1-acyl-sn-glycero-3-phosphate + an acyl-CoA = a 1,2-diacyl-sn-glycero-3-phosphate + CoA. The catalysed reaction is pentadecanoyl-CoA + 1-(9Z-octadecenoyl)-sn-glycero-3-phosphate = 1-(9Z)-octadecenoyl-2-pentadecanoyl-sn-glycero-3-phosphate + CoA. The enzyme catalyses heptadecanoyl-CoA + 1-(9Z-octadecenoyl)-sn-glycero-3-phosphate = 1-(9Z)-octadecenoyl-2-heptadecanoyl-sn-glycero-3-phosphate + CoA. It catalyses the reaction 1-(9Z-octadecenoyl)-sn-glycero-3-phosphate + octadecanoyl-CoA = 1-(9Z-octadecenoyl)-2-octadecanoyl-sn-glycero-3-phosphate + CoA. It carries out the reaction nonadecanoyl-CoA + 1-(9Z-octadecenoyl)-sn-glycero-3-phosphate = 1-(9Z)-octadecenoyl-2-nonadecanoyl-sn-glycero-3-phosphate + CoA. The catalysed reaction is 1-(9Z-octadecenoyl)-sn-glycero-3-phosphate + (5Z,8Z,11Z,14Z)-eicosatetraenoyl-CoA = 1-(9Z)-octadecenoyl-2-(5Z,8Z,11Z,14Z)-eicosatetraenoyl-sn-glycero-3-phosphate + CoA. The enzyme catalyses 1-(9Z-octadecenoyl)-sn-glycero-3-phosphate + (9Z)-octadecenoyl-CoA = 1,2-di-(9Z-octadecenoyl)-sn-glycero-3-phosphate + CoA. It catalyses the reaction 1-(9Z-octadecenoyl)-sn-glycero-3-phosphate + (9Z,12Z)-octadecadienoyl-CoA = 1-(9Z)-octadecenoyl-2-(9Z,12Z)-octadecadienoyl-sn-glycero-3-phosphate + CoA. It carries out the reaction 1-(9Z-octadecenoyl)-sn-glycero-3-phosphocholine + (5Z,8Z,11Z,14Z)-eicosatetraenoyl-CoA = 1-(9Z)-octadecenoyl-2-(5Z,8Z,11Z,14Z)-icosatetraenoyl-sn-glycero-3-phosphocholine + CoA. The catalysed reaction is 1-(9Z-octadecenoyl)-sn-glycero-3-phospho-(1D-myo-inositol) + (5Z,8Z,11Z,14Z)-eicosatetraenoyl-CoA = 1-(9Z-octadecenoyl)-2-(5Z,8Z,11Z,14Z-eicosatetraenoyl)-sn-glycero-3-phospho-1D-myo-inositol + CoA. The enzyme catalyses 1-(9Z-octadecenoyl)-sn-glycero-3-phospho-L-serine + (5Z,8Z,11Z,14Z)-eicosatetraenoyl-CoA = 1-(9Z-octadecenoyl)-2-(5Z,8Z,11Z,14Z-eicosatetraenoyl)-sn-glycero-3-phospho-L-serine + CoA. It catalyses the reaction 1-hexadecanoyl-sn-glycero-3-phosphate + (9Z)-octadecenoyl-CoA = 1-hexadecanoyl-2-(9Z-octadecenoyl)-sn-glycero-3-phosphate + CoA. It carries out the reaction 1-hexadecanoyl-sn-glycero-3-phosphate + (5Z,8Z,11Z,14Z)-eicosatetraenoyl-CoA = 1-hexadecanoyl-2-(5Z,8Z,11Z,14Z-eicosatetraenoyl)-sn-glycero-3-phosphate + CoA. The catalysed reaction is 1-heptadecanoyl-sn-glycero-3-phosphate + (5Z,8Z,11Z,14Z)-eicosatetraenoyl-CoA = 1-heptadecanoyl-2-(5Z,8Z,11Z,14Z)-eicosatetraenoyl-sn-glycero-3-phosphate + CoA. The enzyme catalyses 1-octadecanoyl-sn-glycero-3-phosphate + (9Z)-octadecenoyl-CoA = 1-octadecanoyl-2-(9Z-octadecenoyl)-sn-glycero-3-phosphate + CoA. It catalyses the reaction 1-octadecanoyl-sn-glycero-3-phosphate + (5Z,8Z,11Z,14Z)-eicosatetraenoyl-CoA = 1-octadecanoyl-2-(5Z,8Z,11Z,14Z-eicosatetraenoyl)-sn-glycero-3-phosphate + CoA. It carries out the reaction 1-(9Z-octadecenoyl)-sn-glycero-3-phosphate + hexadecanoyl-CoA = 1-hexadecanoyl-2-(9Z-octadecenoyl)-sn-glycero-3-phosphate + CoA. The catalysed reaction is 1-O-(9Z-octadecenyl)-sn-glycero-3-phosphate + (5Z,8Z,11Z,14Z)-eicosatetraenoyl-CoA = 1-O-(9Z-octadecenyl)-2-(5Z,8Z,11Z,14Z-eicosatetraenoyl)-sn-glycero-3-phosphate + CoA. The enzyme catalyses a 1-acyl-sn-glycero-3-phospho-(1D-myo-inositol) + (5Z,8Z,11Z,14Z)-eicosatetraenoyl-CoA = a 1-acyl-2-(5Z,8Z,11Z,14Z-eicosatetraenoyl)-sn-glycero-3-phospho-(1D-myo-inositol) + CoA. It functions in the pathway phospholipid metabolism; CDP-diacylglycerol biosynthesis; CDP-diacylglycerol from sn-glycerol 3-phosphate: step 2/3. In terms of biological role, converts 1-acyl-sn-glycerol-3-phosphate (lysophosphatidic acid or LPA) into 1,2-diacyl-sn-glycerol-3-phosphate (phosphatidic acid or PA) by incorporating an acyl moiety at the sn-2 position of the glycerol backbone. Acts on LPA containing saturated or unsaturated fatty acids C16:0-C20:4 at the sn-1 position using C18:1, C20:4 or C18:2-CoA as the acyl donor. Also acts on lysophosphatidylcholine, lysophosphatidylinositol and lysophosphatidylserine using C18:1 or C20:4-CoA. Has a preference for arachidonoyl-CoA as a donor. Also has a modest lysophosphatidylinositol acyltransferase (LPIAT) activity, converts lysophosphatidylinositol (LPI) into phosphatidylinositol. This chain is 1-acyl-sn-glycerol-3-phosphate acyltransferase gamma (AGPAT3), found in Pongo abelii (Sumatran orangutan).